Consider the following 156-residue polypeptide: Small ribosomal subunit protein uS7 (156 aa).

This sequence belongs to the universal ribosomal protein uS7 family. As to quaternary structure, part of the 30S ribosomal subunit. Contacts proteins S9 and S11.

Its function is as follows. One of the primary rRNA binding proteins, it binds directly to 16S rRNA where it nucleates assembly of the head domain of the 30S subunit. Is located at the subunit interface close to the decoding center, probably blocks exit of the E-site tRNA. In Bacillus cereus (strain B4264), this protein is Small ribosomal subunit protein uS7.